The sequence spans 183 residues: Ribosome-recycling factor (183 aa).

The protein belongs to the RRF family.

It localises to the cytoplasm. In terms of biological role, responsible for the release of ribosomes from messenger RNA at the termination of protein biosynthesis. May increase the efficiency of translation by recycling ribosomes from one round of translation to another. This Treponema pallidum (strain Nichols) protein is Ribosome-recycling factor.